A 227-amino-acid polypeptide reads, in one-letter code: Cytochrome c oxidase subunit 2 (227 aa).

Residues 1-14 lie on the Mitochondrial intermembrane side of the membrane; the sequence is MAYPMQLGFQDATS. The helical transmembrane segment at 15 to 45 threads the bilayer; sequence PIMEELLHFHDHTLMIVFLISSLVLYIISLM. Residues 46-59 are Mitochondrial matrix-facing; sequence LTTKLTHTSTMDAQ. Residues 60 to 87 form a helical membrane-spanning segment; it reads EVETVWTILPAVILIMIALPSLRILYMM. At 88–227 the chain is on the mitochondrial intermembrane side; the sequence is DEINNPSLTV…HFEKWSASML (140 aa). Residues H161, C196, E198, C200, H204, and M207 each coordinate Cu cation. Residue E198 participates in Mg(2+) binding.

The protein belongs to the cytochrome c oxidase subunit 2 family. As to quaternary structure, component of the cytochrome c oxidase (complex IV, CIV), a multisubunit enzyme composed of 14 subunits. The complex is composed of a catalytic core of 3 subunits MT-CO1, MT-CO2 and MT-CO3, encoded in the mitochondrial DNA, and 11 supernumerary subunits COX4I, COX5A, COX5B, COX6A, COX6B, COX6C, COX7A, COX7B, COX7C, COX8 and NDUFA4, which are encoded in the nuclear genome. The complex exists as a monomer or a dimer and forms supercomplexes (SCs) in the inner mitochondrial membrane with NADH-ubiquinone oxidoreductase (complex I, CI) and ubiquinol-cytochrome c oxidoreductase (cytochrome b-c1 complex, complex III, CIII), resulting in different assemblies (supercomplex SCI(1)III(2)IV(1) and megacomplex MCI(2)III(2)IV(2)). Found in a complex with TMEM177, COA6, COX18, COX20, SCO1 and SCO2. Interacts with TMEM177 in a COX20-dependent manner. Interacts with COX20. Interacts with COX16. It depends on Cu cation as a cofactor.

The protein resides in the mitochondrion inner membrane. The catalysed reaction is 4 Fe(II)-[cytochrome c] + O2 + 8 H(+)(in) = 4 Fe(III)-[cytochrome c] + 2 H2O + 4 H(+)(out). In terms of biological role, component of the cytochrome c oxidase, the last enzyme in the mitochondrial electron transport chain which drives oxidative phosphorylation. The respiratory chain contains 3 multisubunit complexes succinate dehydrogenase (complex II, CII), ubiquinol-cytochrome c oxidoreductase (cytochrome b-c1 complex, complex III, CIII) and cytochrome c oxidase (complex IV, CIV), that cooperate to transfer electrons derived from NADH and succinate to molecular oxygen, creating an electrochemical gradient over the inner membrane that drives transmembrane transport and the ATP synthase. Cytochrome c oxidase is the component of the respiratory chain that catalyzes the reduction of oxygen to water. Electrons originating from reduced cytochrome c in the intermembrane space (IMS) are transferred via the dinuclear copper A center (CU(A)) of subunit 2 and heme A of subunit 1 to the active site in subunit 1, a binuclear center (BNC) formed by heme A3 and copper B (CU(B)). The BNC reduces molecular oxygen to 2 water molecules using 4 electrons from cytochrome c in the IMS and 4 protons from the mitochondrial matrix. This chain is Cytochrome c oxidase subunit 2 (MT-CO2), found in Tragelaphus imberbis (Lesser kudu).